The chain runs to 318 residues: Thymidylate synthase (318 aa).

DUMP is bound by residues R25 and 180 to 181; that span reads RR. The active-site Nucleophile is C200. DUMP is bound by residues 220–223, N231, and 261–263; these read RSGD and HIY. Residue D223 coordinates (6R)-5,10-methylene-5,6,7,8-tetrahydrofolate. Position 317 (A317) interacts with (6R)-5,10-methylene-5,6,7,8-tetrahydrofolate.

This sequence belongs to the thymidylate synthase family. Bacterial-type ThyA subfamily. Homodimer.

It localises to the cytoplasm. It carries out the reaction dUMP + (6R)-5,10-methylene-5,6,7,8-tetrahydrofolate = 7,8-dihydrofolate + dTMP. Its pathway is pyrimidine metabolism; dTTP biosynthesis. In terms of biological role, catalyzes the reductive methylation of 2'-deoxyuridine-5'-monophosphate (dUMP) to 2'-deoxythymidine-5'-monophosphate (dTMP) while utilizing 5,10-methylenetetrahydrofolate (mTHF) as the methyl donor and reductant in the reaction, yielding dihydrofolate (DHF) as a by-product. This enzymatic reaction provides an intracellular de novo source of dTMP, an essential precursor for DNA biosynthesis. The protein is Thymidylate synthase of Bacillus thuringiensis subsp. konkukian (strain 97-27).